The sequence spans 148 residues: Calcium-regulated heat stable protein 1 (148 aa).

The span at 1–12 shows a compositional bias: pro residues; that stretch reads MSSEPPPPPLQP. Residues 1–47 are disordered; it reads MSSEPPPPPLQPPTHQTSVGLLDTPRTRDRSPSPLRGNVVPSPLPTR. Ser-2 carries the N-acetylserine modification. 3 positions are modified to phosphoserine: Ser-31, Ser-33, and Ser-42. Thr-46 carries the phosphothreonine modification. Phosphoserine is present on residues Ser-53 and Ser-59. The CSD domain occupies 63-130; sequence VYKGVCKCFC…KLQAVEVVIT (68 aa). At Ser-147 the chain carries Phosphoserine.

As to quaternary structure, homodimer. Interacts with STYX. Can be phosphorylated by DYRK2 (in vitro). Dephosphorylated by calcineurin in a Ca(2+) dependent manner.

The protein resides in the cytoplasm. Its subcellular location is the P-body. The protein localises to the cytoplasmic granule. In terms of biological role, binds mRNA and regulates the stability of target mRNA. This is Calcium-regulated heat stable protein 1 (Carhsp1) from Mus musculus (Mouse).